Consider the following 1249-residue polypeptide: LRR receptor-like serine/threonine-protein kinase GSO1 (1249 aa).

The first 18 residues, 1–18, serve as a signal peptide directing secretion; sequence MQPLVLLLLFILCFSGLG. Residues 19–876 are Extracellular-facing; the sequence is QPGIINNDLQ…QQGLSARSVV (858 aa). Residues Asn77 and Asn117 are each glycosylated (N-linked (GlcNAc...) asparagine). LRR repeat units lie at residues 94-118, 119-142, 144-166, 168-190, 191-214, 216-238, 239-262, 264-285, 286-310, 312-334, 336-359, 360-383, 385-407, 408-431, 433-455, 457-479, 480-503, 505-527, 528-551, 553-574, 576-598, 599-622, 623-646, 648-670, 671-694, 696-718, 719-742, 744-766, 767-791, 792-815, and 817-838; these read FDNL…LSNL, TSLE…LGSL, NIRS…LGNL, NLQM…LGRL, VRVQ…LGNC, DLTV…LGRL, ENLE…LGEM, QLQY…SLAD, LGNL…FWNM, QLLD…ICSN, TNLE…LSKC, QSLK…LFEL, ELTD…ISNL, TNLQ…ISAL, KLEV…IGNC, SLKM…IGRL, KELN…LGNC, QLNI…FGFL, KGLE…LISL, NLTR…LCGS, SYLS…LGNS, QNLD…LGKI, RELS…LVLC, KLTH…LGKL, SQLG…LFNC, KLLV…IGNL, GALN…MGKL, KLYE…IGQL, QDLQ…IGTL, SKLE…VGDM, and SLGY…QFSR. N-linked (GlcNAc...) asparagine glycosylation is found at Asn213, Asn228, and Asn248. 3 N-linked (GlcNAc...) asparagine glycosylation sites follow: Asn298, Asn309, and Asn334. Residues Asn369, Asn393, and Asn406 are each glycosylated (N-linked (GlcNAc...) asparagine). Residue Asn454 is glycosylated (N-linked (GlcNAc...) asparagine). Residues Asn537, Asn553, Asn558, and Asn565 are each glycosylated (N-linked (GlcNAc...) asparagine). 2 N-linked (GlcNAc...) asparagine glycosylation sites follow: Asn693 and Asn708. An N-linked (GlcNAc...) asparagine glycan is attached at Asn779. Asn822 carries an N-linked (GlcNAc...) asparagine glycan. The chain crosses the membrane as a helical span at residues 877–897; the sequence is IISAISALTAIGLMILVIALF. Topologically, residues 898–1249 are cytoplasmic; sequence FKQRHDFFKK…NNRTAGYKKL (352 aa). Thr948 is subject to Phosphothreonine. Residues 951 to 1240 enclose the Protein kinase domain; that stretch reads LSEEFMIGSG…ACDSLLHVYN (290 aa). ATP is bound by residues 957–965 and Lys979; that span reads IGSGGSGKV. Phosphotyrosine occurs at positions 1027 and 1071. The active-site Proton acceptor is the Asp1084. 2 positions are modified to phosphotyrosine: Tyr1129 and Tyr1136.

This sequence belongs to the protein kinase superfamily. Ser/Thr protein kinase family. As to quaternary structure, interacts with CIF1 and CIF2. Mostly expressed in siliques, seeds, developing embryos and seedlings, detected in flower buds and roots, but not in leaves or stems.

Its subcellular location is the cell membrane. It catalyses the reaction L-seryl-[protein] + ATP = O-phospho-L-seryl-[protein] + ADP + H(+). The enzyme catalyses L-threonyl-[protein] + ATP = O-phospho-L-threonyl-[protein] + ADP + H(+). Functionally, together with GSO2, receptor-like serine/threonine-kinase required during the development of the epidermal surface in embryos and cotyledons. In coordination with GSO2, regulates root growth through control of cell division and cell fate specification. Controls seedling root growth by modulating sucrose response after germination. Receptor of the peptide hormones CIF1 and CIF2 required for contiguous Casparian strip diffusion barrier formation in roots. Required for localizing CASP proteins into the Casparian strip following an uninterrupted, ring-like domain, to trigger endodermal differentiation and thus regulate potassium ion (K) homeostasis. Involved in the maintenance of water transport and root pressure. May also be involved in the regulation of suberin accumulation in the endodermis. The polypeptide is LRR receptor-like serine/threonine-protein kinase GSO1 (Arabidopsis thaliana (Mouse-ear cress)).